A 160-amino-acid polypeptide reads, in one-letter code: S-ribosylhomocysteine lyase (160 aa).

Positions 57, 61, and 127 each coordinate Fe cation.

It belongs to the LuxS family. Homodimer. The cofactor is Fe cation.

The enzyme catalyses S-(5-deoxy-D-ribos-5-yl)-L-homocysteine = (S)-4,5-dihydroxypentane-2,3-dione + L-homocysteine. Its function is as follows. Involved in the synthesis of autoinducer 2 (AI-2) which is secreted by bacteria and is used to communicate both the cell density and the metabolic potential of the environment. The regulation of gene expression in response to changes in cell density is called quorum sensing. Catalyzes the transformation of S-ribosylhomocysteine (RHC) to homocysteine (HC) and 4,5-dihydroxy-2,3-pentadione (DPD). In Streptococcus pyogenes serotype M2 (strain MGAS10270), this protein is S-ribosylhomocysteine lyase.